The sequence spans 122 residues: Insulin-like growth factor 1 (122 aa).

The interval 49-77 (GPETLCGAELVDALQFVCGDRGFYFNKPT) is b. Cystine bridges form between C54/C96, C66/C109, and C95/C100. The c stretch occupies residues 78–89 (GYGSSSRRAPQT). The segment at 90 to 110 (GIVDECCFRSCDLRRLEMYCA) is a. The interval 111-118 (PLKPAKSA) is d. The propeptide at 119-122 (RSVR) is e peptide.

This sequence belongs to the insulin family. Forms a ternary complex with IGFR1 and ITGAV:ITGB3. Forms a ternary complex with IGFR1 and ITGA6:ITGB4. Forms a ternary complex with IGFBP3 and ALS.

The protein resides in the secreted. Its function is as follows. The insulin-like growth factors, isolated from plasma, are structurally and functionally related to insulin but have a much higher growth-promoting activity. May be a physiological regulator of [1-14C]-2-deoxy-D-glucose (2DG) transport and glycogen synthesis in osteoblasts. Stimulates glucose transport in bone-derived osteoblastic (PyMS) cells and is effective at much lower concentrations than insulin, not only regarding glycogen and DNA synthesis but also with regard to enhancing glucose uptake. May play a role in synapse maturation. Ca(2+)-dependent exocytosis of IGF1 is required for sensory perception of smell in the olfactory bulb. Acts as a ligand for IGF1R. Binds to the alpha subunit of IGF1R, leading to the activation of the intrinsic tyrosine kinase activity which autophosphorylates tyrosine residues in the beta subunit thus initiating a cascade of down-stream signaling events leading to activation of the PI3K-AKT/PKB and the Ras-MAPK pathways. Binds to integrins ITGAV:ITGB3 and ITGA6:ITGB4. Its binding to integrins and subsequent ternary complex formation with integrins and IGFR1 are essential for IGF1 signaling. Induces the phosphorylation and activation of IGFR1, MAPK3/ERK1, MAPK1/ERK2 and AKT1. As part of the MAPK/ERK signaling pathway, acts as a negative regulator of apoptosis in cardiomyocytes via promotion of STUB1/CHIP-mediated ubiquitination and degradation of ICER-type isoforms of CREM. This is Insulin-like growth factor 1 from Equus caballus (Horse).